The following is a 338-amino-acid chain: Anthranilate phosphoribosyltransferase (338 aa).

5-phospho-alpha-D-ribose 1-diphosphate contacts are provided by residues Gly-81, 84 to 85 (GD), Thr-89, 91 to 94 (NIST), 109 to 117 (KHGNRGVSS), and Ser-121. Gly-81 contacts anthranilate. Ser-93 is a binding site for Mg(2+). Asn-112 serves as a coordination point for anthranilate. Residue Arg-167 participates in anthranilate binding. Mg(2+)-binding residues include Asp-225 and Glu-226.

The protein belongs to the anthranilate phosphoribosyltransferase family. Homodimer. Requires Mg(2+) as cofactor.

It carries out the reaction N-(5-phospho-beta-D-ribosyl)anthranilate + diphosphate = 5-phospho-alpha-D-ribose 1-diphosphate + anthranilate. The protein operates within amino-acid biosynthesis; L-tryptophan biosynthesis; L-tryptophan from chorismate: step 2/5. In terms of biological role, catalyzes the transfer of the phosphoribosyl group of 5-phosphorylribose-1-pyrophosphate (PRPP) to anthranilate to yield N-(5'-phosphoribosyl)-anthranilate (PRA). This Methanoculleus marisnigri (strain ATCC 35101 / DSM 1498 / JR1) protein is Anthranilate phosphoribosyltransferase.